A 316-amino-acid chain; its full sequence is tRNA dimethylallyltransferase (316 aa).

17–24 (GPTASGKT) is an ATP binding site. 19–24 (TASGKT) is a binding site for substrate. 4 interaction with substrate tRNA regions span residues 42–45 (DSAL), 166–170 (QRLSR), 247–252 (RCVGYR), and 280–287 (KRQITWLR).

Belongs to the IPP transferase family. As to quaternary structure, monomer. The cofactor is Mg(2+).

It catalyses the reaction adenosine(37) in tRNA + dimethylallyl diphosphate = N(6)-dimethylallyladenosine(37) in tRNA + diphosphate. Catalyzes the transfer of a dimethylallyl group onto the adenine at position 37 in tRNAs that read codons beginning with uridine, leading to the formation of N6-(dimethylallyl)adenosine (i(6)A). The sequence is that of tRNA dimethylallyltransferase from Shigella boydii serotype 18 (strain CDC 3083-94 / BS512).